Reading from the N-terminus, the 349-residue chain is Lipoyl synthase (349 aa).

[4Fe-4S] cluster is bound by residues C55, C60, C66, C81, C85, C88, and S292. In terms of domain architecture, Radical SAM core spans W67–K281. The segment at L321–R349 is disordered.

This sequence belongs to the radical SAM superfamily. Lipoyl synthase family. The cofactor is [4Fe-4S] cluster.

The protein localises to the cytoplasm. It carries out the reaction [[Fe-S] cluster scaffold protein carrying a second [4Fe-4S](2+) cluster] + N(6)-octanoyl-L-lysyl-[protein] + 2 oxidized [2Fe-2S]-[ferredoxin] + 2 S-adenosyl-L-methionine + 4 H(+) = [[Fe-S] cluster scaffold protein] + N(6)-[(R)-dihydrolipoyl]-L-lysyl-[protein] + 4 Fe(3+) + 2 hydrogen sulfide + 2 5'-deoxyadenosine + 2 L-methionine + 2 reduced [2Fe-2S]-[ferredoxin]. It participates in protein modification; protein lipoylation via endogenous pathway; protein N(6)-(lipoyl)lysine from octanoyl-[acyl-carrier-protein]: step 2/2. Functionally, catalyzes the radical-mediated insertion of two sulfur atoms into the C-6 and C-8 positions of the octanoyl moiety bound to the lipoyl domains of lipoate-dependent enzymes, thereby converting the octanoylated domains into lipoylated derivatives. The chain is Lipoyl synthase from Corynebacterium jeikeium (strain K411).